The chain runs to 65 residues: Large ribosomal subunit protein bL35 (65 aa).

It belongs to the bacterial ribosomal protein bL35 family.

The polypeptide is Large ribosomal subunit protein bL35 (Aeromonas hydrophila subsp. hydrophila (strain ATCC 7966 / DSM 30187 / BCRC 13018 / CCUG 14551 / JCM 1027 / KCTC 2358 / NCIMB 9240 / NCTC 8049)).